A 316-amino-acid polypeptide reads, in one-letter code: Phosphatidylglycerol--prolipoprotein diacylglyceryl transferase (316 aa).

3 consecutive transmembrane segments (helical) span residues 18–38 (PIPIRAYAMCIIAGIIVAIWL), 47–67 (GGNPEIVLDAAIVAVPAGIIG), and 95–115 (NGGLGIWGAVILGGLAVAVFF). Residue arginine 141 participates in a 1,2-diacyl-sn-glycero-3-phospho-(1'-sn-glycerol) binding. 2 consecutive transmembrane segments (helical) span residues 188–208 (VHPTFLYELLWNLLIFALLMW) and 251–271 (INTIVSAVVFAGAIIVFFLLK). The interval 292-316 (AVASPDGKPLPKAGEGIDGETPSTR) is disordered.

The protein belongs to the Lgt family.

It localises to the cell membrane. The enzyme catalyses L-cysteinyl-[prolipoprotein] + a 1,2-diacyl-sn-glycero-3-phospho-(1'-sn-glycerol) = an S-1,2-diacyl-sn-glyceryl-L-cysteinyl-[prolipoprotein] + sn-glycerol 1-phosphate + H(+). Its pathway is protein modification; lipoprotein biosynthesis (diacylglyceryl transfer). In terms of biological role, catalyzes the transfer of the diacylglyceryl group from phosphatidylglycerol to the sulfhydryl group of the N-terminal cysteine of a prolipoprotein, the first step in the formation of mature lipoproteins. This chain is Phosphatidylglycerol--prolipoprotein diacylglyceryl transferase, found in Corynebacterium glutamicum (strain ATCC 13032 / DSM 20300 / JCM 1318 / BCRC 11384 / CCUG 27702 / LMG 3730 / NBRC 12168 / NCIMB 10025 / NRRL B-2784 / 534).